The sequence spans 249 residues: 1-(5-phosphoribosyl)-5-[(5-phosphoribosylamino)methylideneamino] imidazole-4-carboxamide isomerase (249 aa).

The Proton acceptor role is filled by Asp8. Residue Asp131 is the Proton donor of the active site.

This sequence belongs to the HisA/HisF family.

Its subcellular location is the cytoplasm. It catalyses the reaction 1-(5-phospho-beta-D-ribosyl)-5-[(5-phospho-beta-D-ribosylamino)methylideneamino]imidazole-4-carboxamide = 5-[(5-phospho-1-deoxy-D-ribulos-1-ylimino)methylamino]-1-(5-phospho-beta-D-ribosyl)imidazole-4-carboxamide. It functions in the pathway amino-acid biosynthesis; L-histidine biosynthesis; L-histidine from 5-phospho-alpha-D-ribose 1-diphosphate: step 4/9. This Leptothrix cholodnii (strain ATCC 51168 / LMG 8142 / SP-6) (Leptothrix discophora (strain SP-6)) protein is 1-(5-phosphoribosyl)-5-[(5-phosphoribosylamino)methylideneamino] imidazole-4-carboxamide isomerase.